The sequence spans 1007 residues: A disintegrin and metalloproteinase with thrombospondin motifs 1 (1007 aa).

An N-terminal signal peptide occupies residues 1–20 (MPCCLWAALSLLLAVVGAGA). N-linked (GlcNAc...) asparagine glycosylation is found at asparagine 130 and asparagine 228. Residues 184 to 370 (LWLELAIVAD…WSSCSKEQFH (187 aa)) form the Peptidase M12B domain. Histidine 322 is a Zn(2+) binding site. Positions 322–333 (HELAHLLGLTHD) match the Metal-binding motif. Residue glutamate 323 is part of the active site. Positions 326 and 332 each coordinate Zn(2+). 4 disulfides stabilise this stretch: cysteine 338/cysteine 364, cysteine 494/cysteine 530, cysteine 498/cysteine 536, and cysteine 509/cysteine 520. Residues 482–537 (TPEWGDWEEWSACNADCGYGLRTRTRKCKYRGFVSESACEGAGSQVATCWAGSSCA) form the TSP type-1 1 domain. 6 N-linked (GlcNAc...) asparagine glycosylation sites follow: asparagine 561, asparagine 610, asparagine 626, asparagine 737, asparagine 777, and asparagine 865. TSP type-1 domains lie at 833–899 (CEFV…NRIP) and 900–952 (CPVY…RRCP). 3 disulfide bridges follow: cysteine 912/cysteine 946, cysteine 916/cysteine 951, and cysteine 927/cysteine 935.

It depends on Zn(2+) as a cofactor.

The protein localises to the secreted. It is found in the extracellular space. Its subcellular location is the extracellular matrix. Involved in larval molting and metamorphosis. May degrade extracellular matrix (ECM) and basement membrane (BM) during the development of organs to allow degeneration and remodeling of tissues. The sequence is that of A disintegrin and metalloproteinase with thrombospondin motifs 1 from Bombyx mori (Silk moth).